The following is a 303-amino-acid chain: MGVVLITVVTVVDRHKALPNSSIDVDGHLWEFLSRQCFVLASEPLGIPIVVRSADLYRFSSSLLTLPKACRPIVRTRGDTAIALDRNGVVYHEDRMGVSIEWLSVLSGYNHLNSSLIINQPYHLWVLGAADLCKPVFDLIPGPKRMVYAEIADEFHKSWQPPFVCGKLFETIPWTTVEHNHPLKLRAAGGEDTVVGECGFSKHSSNSLVHPPTVNRVIYAVVDPARLREIPAPGRPLPRRRPSEGGMRAPRRRSRAPAPARSTAAAATPPRPGDPRAPAARRAGDVTWMERLLWGVFGRTSTR.

Positions 230 to 284 (IPAPGRPLPRRRPSEGGMRAPRRRSRAPAPARSTAAAATPPRPGDPRAPAARRAG) are disordered. Over residues 256–268 (APAPARSTAAAAT) the composition is skewed to low complexity.

This sequence belongs to the herpesviridae US2 family.

The sequence is that of US1 protein (US1) from Equine herpesvirus 1 (strain Kentucky A) (EHV-1).